Consider the following 498-residue polypeptide: ADP,ATP carrier protein 1 (498 aa).

At 1–33 the chain is on the cytoplasmic side; that stretch reads MSTSKSENYLSELRKIIWPIEQYENKKFLPLAF. The chain crosses the membrane as a helical span at residues 34–54; that stretch reads MMFCILLNYSTLRSIKDGFVV. A disulfide bridge links Cys-37 with Cys-85. Residues 55-67 are Extracellular-facing; that stretch reads TDIGTESISFLKT. The chain crosses the membrane as a helical span at residues 68 to 88; the sequence is YIVLPSAVIAMIIYVKLCDIL. At 89 to 92 the chain is on the cytoplasmic side; it reads KQEN. Residues 93-113 form a helical membrane-spanning segment; the sequence is VFYVITSFFLGYFALFAFVLY. Over 114–147 the chain is Extracellular; it reads PYPDLVHPDHKTIESLSLAYPNFKWFIKIVGKWS. The chain crosses the membrane as a helical span at residues 148–168; that stretch reads FASFYTIAELWGTMMLSLLFW. Topologically, residues 169 to 184 are cytoplasmic; it reads QFANQITKIAEAKRFY. The chain crosses the membrane as a helical span at residues 185–205; it reads SMFGLLANLALPVTSVVIGYF. Over 206-218 the chain is Extracellular; the sequence is LHEKTQIVAEHLK. A helical membrane pass occupies residues 219 to 239; sequence FVPLFVIMITSSFLIILTYRW. Topologically, residues 240-279 are cytoplasmic; that stretch reads MNKNVLTDPRLYDPALVKEKKTKAKLSFIESLKMIFTSKY. The chain crosses the membrane as a helical span at residues 280 to 300; it reads VGYIALLIIAYGVSVNLVEGV. Residues 301–320 lie on the Extracellular side of the membrane; that stretch reads WKSKVKELYPTKEAYTIYMG. Residues 321–341 form a helical membrane-spanning segment; the sequence is QFQFYQGWVAIAFMLIGSNIL. Residues 342–348 are Cytoplasmic-facing; the sequence is RKVSWLT. Residues 349 to 369 form a helical membrane-spanning segment; the sequence is AAMITPLMMFITGAAFFSFIF. The Extracellular portion of the chain corresponds to 370-379; it reads FDSVIAMNLT. Residues 380–400 form a helical membrane-spanning segment; that stretch reads GILASSPLTLAVMIGMIQNVL. Topologically, residues 401-438 are cytoplasmic; that stretch reads SKGVKYSLFDATKNMAYIPLDKDLRVKGQAAVEVIGGR. Residue 436–442 coordinates ATP; that stretch reads GGRLGKS. A helical transmembrane segment spans residues 439–459; that stretch reads LGKSGGAIIQSTFFILFPVFG. At 460–465 the chain is on the extracellular side; the sequence is FIEATP. A helical membrane pass occupies residues 466 to 486; it reads YFASIFFIIVILWIFAVKGLN. Topologically, residues 487-498 are cytoplasmic; it reads KEYQVLVNKNEK.

Belongs to the ADP/ATP translocase tlc family.

It localises to the cell membrane. Its function is as follows. Provides the rickettsial cell with host ATP in exchange for rickettsial ADP. This is an obligate exchange system. This energy acquiring activity is an important component of rickettsial parasitism. In Rickettsia prowazekii (strain Madrid E), this protein is ADP,ATP carrier protein 1 (tlcA).